We begin with the raw amino-acid sequence, 157 residues long: Phosphopantetheine adenylyltransferase (157 aa).

S8 contacts substrate. ATP contacts are provided by residues 8–9 (SF) and H16. The substrate site is built by K40, T72, and R86. Residues 87-89 (GLR), E97, and 122-128 (YSFLSSS) contribute to the ATP site.

This sequence belongs to the bacterial CoaD family. In terms of assembly, homohexamer. Mg(2+) serves as cofactor.

The protein resides in the cytoplasm. The enzyme catalyses (R)-4'-phosphopantetheine + ATP + H(+) = 3'-dephospho-CoA + diphosphate. Its pathway is cofactor biosynthesis; coenzyme A biosynthesis; CoA from (R)-pantothenate: step 4/5. Reversibly transfers an adenylyl group from ATP to 4'-phosphopantetheine, yielding dephospho-CoA (dPCoA) and pyrophosphate. This chain is Phosphopantetheine adenylyltransferase, found in Gloeothece citriformis (strain PCC 7424) (Cyanothece sp. (strain PCC 7424)).